A 357-amino-acid polypeptide reads, in one-letter code: UDP-N-acetylglucosamine--N-acetylmuramyl-(pentapeptide) pyrophosphoryl-undecaprenol N-acetylglucosamine transferase (357 aa).

Residues 11–13 (TGG), Asn123, Arg159, Ser187, Ile241, 260–265 (ALTVAE), and Gln286 each bind UDP-N-acetyl-alpha-D-glucosamine.

This sequence belongs to the glycosyltransferase 28 family. MurG subfamily.

It is found in the cell inner membrane. The enzyme catalyses di-trans,octa-cis-undecaprenyl diphospho-N-acetyl-alpha-D-muramoyl-L-alanyl-D-glutamyl-meso-2,6-diaminopimeloyl-D-alanyl-D-alanine + UDP-N-acetyl-alpha-D-glucosamine = di-trans,octa-cis-undecaprenyl diphospho-[N-acetyl-alpha-D-glucosaminyl-(1-&gt;4)]-N-acetyl-alpha-D-muramoyl-L-alanyl-D-glutamyl-meso-2,6-diaminopimeloyl-D-alanyl-D-alanine + UDP + H(+). The protein operates within cell wall biogenesis; peptidoglycan biosynthesis. Its function is as follows. Cell wall formation. Catalyzes the transfer of a GlcNAc subunit on undecaprenyl-pyrophosphoryl-MurNAc-pentapeptide (lipid intermediate I) to form undecaprenyl-pyrophosphoryl-MurNAc-(pentapeptide)GlcNAc (lipid intermediate II). The protein is UDP-N-acetylglucosamine--N-acetylmuramyl-(pentapeptide) pyrophosphoryl-undecaprenol N-acetylglucosamine transferase of Aromatoleum aromaticum (strain DSM 19018 / LMG 30748 / EbN1) (Azoarcus sp. (strain EbN1)).